The sequence spans 553 residues: Mucolipin-3 (553 aa).

The Cytoplasmic segment spans residues 1-62 (MADPEVVVSS…FWARGRKPWK (62 aa)). Positions 52 to 62 (KFWARGRKPWK) are interaction with phosphoinositides. The helical transmembrane segment at 63-83 (LAIQILKIAMVTIQLVLFGLS) threads the bilayer. The Extracellular segment spans residues 84–283 (NQMVVAFKEE…VSGSIQKNTH (200 aa)). The extracellular/lumenal pore loop stretch occupies residues 104–118 (KGYMDRMDDTYAVYT). N-linked (GlcNAc...) asparagine glycans are attached at residues Asn-138, Asn-172, and Asn-205. Residues Cys-159 and Cys-185 are joined by a disulfide bond. Residues Cys-238 and Cys-269 are joined by a disulfide bond. The chain crosses the membrane as a helical span at residues 284-304 (YMMIFDAFVILTCLVSLILCI). Residues 305–341 (RSVIRGLQLQQEFVNFFLLHYKKEVSVSDQMEFVNGW) are Cytoplasmic-facing. Residues 342–362 (YIMIIISDILTIIGSILKMEI) traverse the membrane as a helical segment. The Extracellular portion of the chain corresponds to 363–371 (QAKSLTSYD). A helical transmembrane segment spans residues 372–392 (VCSILLGTSTMLVWLGVIRYL). The Cytoplasmic portion of the chain corresponds to 393–414 (GFFAKYNLLILTLQAALPNVIR). Residues 415-435 (FCCCAAMIYLGYCFCGWIVLG) form a helical membrane-spanning segment. The Extracellular portion of the chain corresponds to 436–443 (PYHDKFRS). The pore-forming intramembrane region spans 444–464 (LNMVSECLFSLINGDDMFATF). Positions 456-459 (NGDD) match the Selectivity filter motif. Topologically, residues 465–475 (AKMQQKSYLVW) are extracellular. The helical transmembrane segment at 476-497 (LFSRIYLYSFISLFIYMILSLF) threads the bilayer. Residues 498–553 (IALITDTYETIKQYQQDGFPETELRTFISECKDLPNSGKYRLEDDPPVSLFCCCKK) lie on the Cytoplasmic side of the membrane.

It belongs to the transient receptor (TC 1.A.4) family. Polycystin subfamily. MCOLN3 sub-subfamily. In terms of assembly, homotetramer. Can heterooligomerize with MCOLN1; heteromeric assemblies have different channel properties as compared to the respective homooligomers and may be tissue-specific. May heterooligomerize with TRPV5 to form a functional distinct ion channel. Interacts with GABARAPL2. In terms of processing, N-glycosylated.

It is found in the cell membrane. The protein resides in the early endosome membrane. Its subcellular location is the late endosome membrane. The protein localises to the lysosome membrane. It localises to the cytoplasmic vesicle. It is found in the autophagosome membrane. It carries out the reaction Ca(2+)(in) = Ca(2+)(out). The enzyme catalyses K(+)(in) = K(+)(out). The catalysed reaction is Na(+)(in) = Na(+)(out). With respect to regulation, channel activity is activated by PtdIns(3,5)P2 (phosphatidylinositol 3,5-bisphosphate). Inhibited by lumenal H(+) and Na(+). The channel pore shows dynamic behavior and undergoes spontaneous, Ca(2+)-dependent modulation when conducting Ca(2+). Nonselective cation channel probably playing a role in the regulation of membrane trafficking events. Acts as a Ca(2+)-permeable cation channel with inwardly rectifying activity. Mediates release of Ca(2+) from endosomes to the cytoplasm, contributes to endosomal acidification and is involved in the regulation of membrane trafficking and fusion in the endosomal pathway. Also permeable to Mg(2+), Na(+) and K(+). Does not seem to act as mechanosensory transduction channel in inner ear sensory hair cells. Proposed to play a critical role at the cochlear stereocilia ankle-link region during hair-bundle growth. Involved in the regulation of autophagy. Through association with GABARAPL2 may be involved in autophagosome formation possibly providing Ca(2+) for the fusion process. Through a possible and probably tissue-specific heteromerization with MCOLN1 may be at least in part involved in many lysosome-dependent cellular events. Possible heteromeric ion channel assemblies with TRPV5 show pharmacological similarity with TRPML3. The protein is Mucolipin-3 (MCOLN3) of Homo sapiens (Human).